The following is a 169-amino-acid chain: MLNAKKSNKTKEKETDWQERVIQVRRVTKVVKGGKKLSFRAIIILGNERGQVGVGVGKASDVIGAVKKAVTDGRKNLINIPLTNQNSIPHIVQGYSGAAKVIIKPSAPGSGVIAGGSVRTILELAGIKNILAKQLGSSNPLNNARAAANALINLRTYTSVLNDRNLDLH.

Positions 17–80 (WQERVIQVRR…TDGRKNLINI (64 aa)) constitute an S5 DRBM domain.

Belongs to the universal ribosomal protein uS5 family. As to quaternary structure, part of the 30S ribosomal subunit. Contacts protein S4.

It is found in the plastid. Its subcellular location is the chloroplast. Functionally, with S4 and S12 plays an important role in translational accuracy. The chain is Small ribosomal subunit protein uS5c (rps5) from Guillardia theta (Cryptophyte).